Reading from the N-terminus, the 882-residue chain is Ion channel DMI1 (882 aa).

A disordered region spans residues 1 to 122; that stretch reads MAKSNEESSN…PSSSSITKQQ (122 aa). Positions 48–62 are enriched in polar residues; the sequence is TSTTKTDFSEQQWNY. A compositionally biased stretch (pro residues) spans 78-95; that stretch reads PPPPPSKPPVNLIPPHPR. The segment covering 107 to 117 has biased composition (low complexity); that stretch reads SSLLPQPSSSS. 4 helical membrane-spanning segments follow: residues 129–149, 192–212, 255–275, and 307–327; these read SPIFYLLVICCIILVPYSAYL, TIALYIVLFTLILPFVLYKYL, LALLCATLFLIAFGGLALYAV, and IVSVSISAGGMLIFAMMLGLV. 2 consecutive RCK N-terminal domains span residues 348–489 and 608–757; these read RNHV…ETVV and PEKI…DKSI. The stretch at 378–403 forms a coiled coil; sequence VIVVLAEKEKEEMEMDIAKLEFDFMG.

Belongs to the castor/pollux (TC 1.A.1.23) family. As to quaternary structure, interacts (via c-terminus) with CNGC15A, CNGC15B and CNGC15C (via N-terminus). The Nod factor has no effect on these interactions, implying that the complex is maintained after activation. In terms of tissue distribution, mainly expressed in roots and nodules. Also detected in pods, flowers, leaves, and stems.

It is found in the nucleus membrane. Functionally, required for early signal transduction events leading to endosymbiosis. Acts early in a signal transduction chain leading from the perception of Nod factor to the activation of calcium spiking. Also involved in mycorrhizal symbiosis. May be involved in the regulation of the calcium channel responsible for calcium spiking by mobilizing another cation, and thereby altering the membrane potential. The protein is Ion channel DMI1 of Medicago truncatula (Barrel medic).